Consider the following 106-residue polypeptide: Integration host factor subunit alpha (106 aa).

Belongs to the bacterial histone-like protein family. Heterodimer of an alpha and a beta chain.

This protein is one of the two subunits of integration host factor, a specific DNA-binding protein that functions in genetic recombination as well as in transcriptional and translational control. The polypeptide is Integration host factor subunit alpha (Methylobacterium radiotolerans (strain ATCC 27329 / DSM 1819 / JCM 2831 / NBRC 15690 / NCIMB 10815 / 0-1)).